Here is a 108-residue protein sequence, read N- to C-terminus: Type III secretion system chaperone SseA (108 aa).

Positions N69–A97 form a coiled coil.

In terms of assembly, binds to SseB and SseD.

Its subcellular location is the cytoplasm. In terms of biological role, functions as a type III secretion system (T3SS) chaperone, which is required for SseB and SseD accumulation and secretion. May have a direct role in secretion of SseB and SseD, or may facilitate their correct folding, for efficient secretion and function. Required for survival and replication within epithelial cells and macrophages. The polypeptide is Type III secretion system chaperone SseA (sseA) (Salmonella typhimurium (strain LT2 / SGSC1412 / ATCC 700720)).